Here is a 268-residue protein sequence, read N- to C-terminus: Undecaprenyl-diphosphatase (268 aa).

A run of 8 helical transmembrane segments spans residues 3-23 (VFNLLEAAFLGLIEGLTEFIP), 46-66 (FEVLIQLGAILAILTVYSAKL), 84-104 (FGILVAFLPAAVIGALAHGFI), 107-127 (VLFETPMLVCIMLIIGGFILL), 144-164 (YPLPMCLAIGFIQCLAMIPGV), 184-204 (AAEFSFFLAMPTMAGAFAYDL), 218-238 (LIGVGFVMAFISGVFVVRYLL), and 248-268 (LFGWWRLIVGSVGLAALLVWG).

Belongs to the UppP family.

The protein localises to the cell inner membrane. The catalysed reaction is di-trans,octa-cis-undecaprenyl diphosphate + H2O = di-trans,octa-cis-undecaprenyl phosphate + phosphate + H(+). Catalyzes the dephosphorylation of undecaprenyl diphosphate (UPP). Confers resistance to bacitracin. This chain is Undecaprenyl-diphosphatase, found in Brucella anthropi (strain ATCC 49188 / DSM 6882 / CCUG 24695 / JCM 21032 / LMG 3331 / NBRC 15819 / NCTC 12168 / Alc 37) (Ochrobactrum anthropi).